Consider the following 339-residue polypeptide: Ketol-acid reductoisomerase (NADP(+)) (339 aa).

Positions 1-182 (MRVYYDRDAD…GGGRAGIIET (182 aa)) constitute a KARI N-terminal Rossmann domain. NADP(+) is bound by residues 24 to 27 (YGSQ), arginine 48, serine 51, threonine 53, and 83 to 86 (DELQ). Residue histidine 108 is part of the active site. Position 134 (glycine 134) interacts with NADP(+). In terms of domain architecture, KARI C-terminal knotted spans 183 to 328 (SFKEECETDL…AKLREMMPWI (146 aa)). Mg(2+) is bound by residues aspartate 191, glutamate 195, glutamate 227, and glutamate 231. Serine 252 is a substrate binding site.

This sequence belongs to the ketol-acid reductoisomerase family. Requires Mg(2+) as cofactor.

It catalyses the reaction (2R)-2,3-dihydroxy-3-methylbutanoate + NADP(+) = (2S)-2-acetolactate + NADPH + H(+). The catalysed reaction is (2R,3R)-2,3-dihydroxy-3-methylpentanoate + NADP(+) = (S)-2-ethyl-2-hydroxy-3-oxobutanoate + NADPH + H(+). Its pathway is amino-acid biosynthesis; L-isoleucine biosynthesis; L-isoleucine from 2-oxobutanoate: step 2/4. It functions in the pathway amino-acid biosynthesis; L-valine biosynthesis; L-valine from pyruvate: step 2/4. In terms of biological role, involved in the biosynthesis of branched-chain amino acids (BCAA). Catalyzes an alkyl-migration followed by a ketol-acid reduction of (S)-2-acetolactate (S2AL) to yield (R)-2,3-dihydroxy-isovalerate. In the isomerase reaction, S2AL is rearranged via a Mg-dependent methyl migration to produce 3-hydroxy-3-methyl-2-ketobutyrate (HMKB). In the reductase reaction, this 2-ketoacid undergoes a metal-dependent reduction by NADPH to yield (R)-2,3-dihydroxy-isovalerate. In Rhodopseudomonas palustris (strain BisB5), this protein is Ketol-acid reductoisomerase (NADP(+)).